Here is a 472-residue protein sequence, read N- to C-terminus: Inhibitor of Apoptosis OPG037 (472 aa).

ANK repeat units follow at residues 97 to 126 (DGNY…DPNA), 130 to 161 (HNKT…KINN), 233 to 263 (DGNT…DVNK), 267 to 297 (FGDS…VITD), 322 to 351 (YDST…ICED), and 353 to 377 (MYYA…SVDS).

It belongs to the orthopoxvirus OPG037 protein family. In terms of assembly, may interact with host caspase-9-Apaf-1 complex.

Its subcellular location is the host cytoplasm. Functionally, inhibits host apoptosis. Acts by associating with host apoptosome. This is Inhibitor of Apoptosis OPG037 (OPG037) from Homo sapiens (Human).